The primary structure comprises 3133 residues: Hemocytin (3133 aa).

Positions 40-96 constitute a TIL 1 domain; the sequence is CTGGQQYTVCADSCLRKCSDTALAASGQCKPVCVEGCACSPSQLLDDNGVCVPVAKC. The N-linked (GlcNAc...) asparagine glycan is linked to N151. The 57-residue stretch at 153-209 folds into the TIL 2 domain; that stretch reads TAQNMEFTTCETSEPLTCKNMHLPPSTQTAECRPGCQCKKGQVLDTASKRCVPATQC. N237 carries N-linked (GlcNAc...) asparagine glycosylation. A VWFD 1 domain is found at 247 to 418; sequence GVCGAWGDSH…DSWKLKPTCP (172 aa). Intrachain disulfides connect C249–C380, C271–C417, and C295–C302. Residues 509–576 enclose the TIL 3 domain; sequence CDEVCSNYDS…TTECVPRAKC (68 aa). N564 carries an N-linked (GlcNAc...) asparagine glycan. A disordered region spans residues 661–680; that stretch reads PDGQSVESEPLPKPNELQIG. One can recognise a TIL 4 domain in the interval 770-837; that stretch reads CPPGEVYQAC…ERTCVPVKDC (68 aa). The interval 899-924 is disordered; the sequence is STTTTTTTSTTTTTTTPEPTETTTET. 2 cysteine pairs are disulfide-bonded: C940–C1095 and C1116–C1254. 2 F5/8 type C domains span residues 940 to 1095 and 1116 to 1254; these read CSPD…IIGC and CTEP…PIGC. N1170, N1387, N1622, N1727, and N1847 each carry an N-linked (GlcNAc...) asparagine glycan. Residues 1619–1794 form the VWFD 2 domain; sequence VFCNMTGRTF…KPGVPADACA (176 aa). Intrachain disulfides connect C1621–C1754 and C1641–C1793. The 59-residue stretch at 1890-1948 folds into the TIL 5 domain; it reads CPPPLVHYDCYRKRCEETCAPYPNAARACPAQEGQCSPGCYCPDGKLRKGDQCVLPADC. Residues 1951–2136 form the VWFD 3 domain; sequence CTCTGVGTPA…WQASPEKLTE (186 aa). 2 disulfides stabilise this stretch: C1953–C2099 and C2001–C2009. Residues N1975 and N1985 are each glycosylated (N-linked (GlcNAc...) asparagine). Residues N2093, N2113, N2161, N2276, and N2451 are each glycosylated (N-linked (GlcNAc...) asparagine). A TIL 6 domain is found at 2229–2285; sequence CEEPFVYRACVDCERTCDNYEQLQTSPEKCTNKPVEGCFCPEGKVRVNNTCIEPGKC. Residues 2553–2622 enclose the VWFC 1 domain; it reads VACRHQDNVY…DSGQCCGKCE (70 aa). Residues N2647, N2654, N2663, N2794, N2810, N2865, N2929, N2964, and N3028 are each glycosylated (N-linked (GlcNAc...) asparagine). Residues 2842–2907 form the VWFC 2 domain; it reads VACRDGDKIY…AADHCCGRCV (66 aa). 4 cysteine pairs are disulfide-bonded: C2971–C3040, C2991–C3054, C3004–C3070, and C3020–C3072. The CTCK domain occupies 2971-3076; that stretch reads CNEKPQALSK…PARCHCAACG (106 aa).

May be converted into the 260 kDa mature hemocytin by proteolysis.

Functionally, adhesive protein and relates to hemostasis or encapsulation of foreign substances for self-defense. The polypeptide is Hemocytin (Bombyx mori (Silk moth)).